A 334-amino-acid chain; its full sequence is Formylmethanofuran--tetrahydromethanopterin formyltransferase (334 aa).

The protein belongs to the FTR family. Homotetramer.

The protein localises to the cytoplasm. The enzyme catalyses N-formylmethanofuran + 5,6,7,8-tetrahydromethanopterin + H(+) = N(5)-formyl-5,6,7,8-tetrahydromethanopterin + methanofuran. The protein operates within one-carbon metabolism; formaldehyde degradation; formate from formaldehyde (H(4)MPT route): step 4/5. Functionally, catalyzes the transfer of a formyl group from 5-formyl tetrahydromethanopterin (5-formyl-H(4)MPT) to methanofuran (MFR) to produce formylmethanofuran (formyl-MFR) and tetrahydromethanopterin (H(4)MPT). This Rhodopirellula baltica (strain DSM 10527 / NCIMB 13988 / SH1) protein is Formylmethanofuran--tetrahydromethanopterin formyltransferase.